Consider the following 175-residue polypeptide: uncharacterized protein (175 aa).

2 disordered regions span residues 1–32 (MSHK…KLRH) and 156–175 (KQKQ…KYRQ). The segment covering 14 to 24 (LLSSSSPVAKK) has biased composition (low complexity).

This is an uncharacterized protein from Mycoplasma pneumoniae (strain ATCC 29342 / M129 / Subtype 1) (Mycoplasmoides pneumoniae).